We begin with the raw amino-acid sequence, 180 residues long: Protein SPMIP9 (180 aa).

As to quaternary structure, microtubule inner protein component of sperm flagellar doublet microtubules.

The protein localises to the nucleus. It localises to the cytoplasm. The protein resides in the cytoskeleton. Its subcellular location is the flagellum axoneme. Functionally, microtubule inner protein (MIP) part of the dynein-decorated doublet microtubules (DMTs) in flagella axoneme. The protein is Protein SPMIP9 (SPMIP9) of Bos taurus (Bovine).